A 170-amino-acid polypeptide reads, in one-letter code: Photosystem I assembly protein Ycf3 (170 aa).

3 TPR repeats span residues 35 to 68, 72 to 105, and 120 to 153; these read AFTY…EIDP, SYIL…NPFL, and GEQA…TPGN.

The protein belongs to the Ycf3 family.

Its subcellular location is the plastid. The protein resides in the chloroplast thylakoid membrane. Essential for the assembly of the photosystem I (PSI) complex. May act as a chaperone-like factor to guide the assembly of the PSI subunits. In Triticum aestivum (Wheat), this protein is Photosystem I assembly protein Ycf3.